The primary structure comprises 474 residues: PTS system sucrose-specific EIIBC component (474 aa).

Residues 4–87 (SQIAQQVIDK…SKLLGIGDMT (84 aa)) form the PTS EIIB type-1 domain. The active-site Phosphocysteine intermediate; for EIIB activity is Cys-26. The PTS EIIC type-1 domain occupies 107–474 (KGLADIFVPI…LGKRAQLKAE (368 aa)). Helical transmembrane passes span 109 to 129 (LADI…LMGI), 158 to 178 (FINT…GFSA), 182 to 202 (FGGN…PALS), 229 to 249 (VGYQ…ATLE), 264 to 284 (ITPL…IGPI), 303 to 323 (LGFV…ITGM), 345 to 365 (FIFP…LGAA), 376 to 396 (IAVP…MFGV), 403 to 423 (PFIS…LFNV), and 444 to 464 (LAMY…LTVI).

The protein resides in the cell inner membrane. It carries out the reaction N(pros)-phospho-L-histidyl-[protein](out) + sucrose = sucrose 6(G)-phosphate(in) + L-histidyl-[protein]. In terms of biological role, the phosphoenolpyruvate-dependent sugar phosphotransferase system (sugar PTS), a major carbohydrate active transport system, catalyzes the phosphorylation of incoming sugar substrates concomitantly with their translocation across the cell membrane. This system is involved in sucrose transport. This chain is PTS system sucrose-specific EIIBC component (scrA), found in Pasteurella multocida (strain Pm70).